The primary structure comprises 100 residues: Small ribosomal subunit protein uS14 (100 aa).

It belongs to the universal ribosomal protein uS14 family. As to quaternary structure, part of the 30S ribosomal subunit. Contacts proteins S3 and S10.

Functionally, binds 16S rRNA, required for the assembly of 30S particles and may also be responsible for determining the conformation of the 16S rRNA at the A site. This Gloeothece citriformis (strain PCC 7424) (Cyanothece sp. (strain PCC 7424)) protein is Small ribosomal subunit protein uS14.